Here is a 277-residue protein sequence, read N- to C-terminus: Energy-coupling factor transporter ATP-binding protein EcfA1 (277 aa).

The 238-residue stretch at 5–242 folds into the ABC transporter domain; it reads VKVNNISFEY…IKMLKEIGLD (238 aa). 41-48 is an ATP binding site; it reads GHNGSGKS.

This sequence belongs to the ABC transporter superfamily. Energy-coupling factor EcfA family. In terms of assembly, forms a stable energy-coupling factor (ECF) transporter complex composed of 2 membrane-embedded substrate-binding proteins (S component), 2 ATP-binding proteins (A component) and 2 transmembrane proteins (T component).

It localises to the cell membrane. In terms of biological role, ATP-binding (A) component of a common energy-coupling factor (ECF) ABC-transporter complex. Unlike classic ABC transporters this ECF transporter provides the energy necessary to transport a number of different substrates. In Clostridioides difficile (strain 630) (Peptoclostridium difficile), this protein is Energy-coupling factor transporter ATP-binding protein EcfA1.